Here is a 235-residue protein sequence, read N- to C-terminus: Glycerol-3-phosphate acyltransferase (235 aa).

Transmembrane regions (helical) follow at residues 4-24 (LLAILTVSYIIGSIPTSIMAG), 56-76 (TVTLIDIVKGVVAAVSVVAFF), 94-114 (LLAGMSAVIGHVFTVFAGFKG), 126-146 (IGIAPVSMLMVIGIFLLTVWF), 152-172 (VASIFAAVAFPLIIAIRKYVF), and 194-214 (SLDYHLIIFGLLVAFAILFTH).

Belongs to the PlsY family. In terms of assembly, probably interacts with PlsX.

The protein localises to the cell inner membrane. It catalyses the reaction an acyl phosphate + sn-glycerol 3-phosphate = a 1-acyl-sn-glycero-3-phosphate + phosphate. It participates in lipid metabolism; phospholipid metabolism. In terms of biological role, catalyzes the transfer of an acyl group from acyl-phosphate (acyl-PO(4)) to glycerol-3-phosphate (G3P) to form lysophosphatidic acid (LPA). This enzyme utilizes acyl-phosphate as fatty acyl donor, but not acyl-CoA or acyl-ACP. The polypeptide is Glycerol-3-phosphate acyltransferase (Chlorobium phaeovibrioides (strain DSM 265 / 1930) (Prosthecochloris vibrioformis (strain DSM 265))).